The sequence spans 167 residues: Translation initiation factor IF-3 (167 aa).

Belongs to the IF-3 family. As to quaternary structure, monomer.

It localises to the cytoplasm. In terms of biological role, IF-3 binds to the 30S ribosomal subunit and shifts the equilibrium between 70S ribosomes and their 50S and 30S subunits in favor of the free subunits, thus enhancing the availability of 30S subunits on which protein synthesis initiation begins. The chain is Translation initiation factor IF-3 from Bacillus cereus (strain ATCC 14579 / DSM 31 / CCUG 7414 / JCM 2152 / NBRC 15305 / NCIMB 9373 / NCTC 2599 / NRRL B-3711).